Reading from the N-terminus, the 145-residue chain is Toxin coregulated pilus biosynthesis protein H (145 aa).

Functionally, involved in TCP pilus biogenesis. The sequence is that of Toxin coregulated pilus biosynthesis protein H (tcpH) from Vibrio cholerae serotype O1 (strain ATCC 39315 / El Tor Inaba N16961).